A 378-amino-acid polypeptide reads, in one-letter code: Deoxyguanosinetriphosphate triphosphohydrolase-like protein (378 aa).

In terms of domain architecture, HD spans 62–198 (RLTHTIEVAQ…AAVADDVAYN (137 aa)).

The protein belongs to the dGTPase family. Type 2 subfamily.

The chain is Deoxyguanosinetriphosphate triphosphohydrolase-like protein from Paracoccus denitrificans (strain Pd 1222).